A 366-amino-acid chain; its full sequence is Chorismate synthase (366 aa).

2 residues coordinate NADP(+): R48 and R54. FMN is bound by residues 125–127 (RSS), 238–239 (NA), G278, 293–297 (KPTSS), and R319.

It belongs to the chorismate synthase family. Homotetramer. It depends on FMNH2 as a cofactor.

The enzyme catalyses 5-O-(1-carboxyvinyl)-3-phosphoshikimate = chorismate + phosphate. It participates in metabolic intermediate biosynthesis; chorismate biosynthesis; chorismate from D-erythrose 4-phosphate and phosphoenolpyruvate: step 7/7. Functionally, catalyzes the anti-1,4-elimination of the C-3 phosphate and the C-6 proR hydrogen from 5-enolpyruvylshikimate-3-phosphate (EPSP) to yield chorismate, which is the branch point compound that serves as the starting substrate for the three terminal pathways of aromatic amino acid biosynthesis. This reaction introduces a second double bond into the aromatic ring system. This Herminiimonas arsenicoxydans protein is Chorismate synthase.